Here is a 156-residue protein sequence, read N- to C-terminus: Small ribosomal subunit protein uS7 (156 aa).

Belongs to the universal ribosomal protein uS7 family. As to quaternary structure, part of the 30S ribosomal subunit. Contacts proteins S9 and S11.

In terms of biological role, one of the primary rRNA binding proteins, it binds directly to 16S rRNA where it nucleates assembly of the head domain of the 30S subunit. Is located at the subunit interface close to the decoding center, probably blocks exit of the E-site tRNA. This chain is Small ribosomal subunit protein uS7, found in Paracoccus denitrificans (strain Pd 1222).